Here is a 203-residue protein sequence, read N- to C-terminus: Selenocysteine-containing peroxiredoxin PrxU (203 aa).

The 159-residue stretch at 2-160 folds into the Thioredoxin domain; sequence VSVGKKAPDF…TLRQIQAFQL (159 aa). The active site involves selenocysteine 47. Position 47 (selenocysteine 47) is a non-standard amino acid, selenocysteine.

Belongs to the peroxiredoxin family. AhpC/Prx1 subfamily.

It catalyses the reaction a hydroperoxide + [thioredoxin]-dithiol = an alcohol + [thioredoxin]-disulfide + H2O. Thiol-specific peroxidase that catalyzes the reduction of hydrogen peroxide and organic hydroperoxides to water and alcohols, respectively. Plays a role in cell protection against oxidative stress by detoxifying peroxides. The sequence is that of Selenocysteine-containing peroxiredoxin PrxU from Peptoclostridium acidaminophilum (Eubacterium acidaminophilum).